Reading from the N-terminus, the 250-residue chain is 3-deoxy-manno-octulosonate cytidylyltransferase (250 aa).

It belongs to the KdsB family.

Its subcellular location is the cytoplasm. It catalyses the reaction 3-deoxy-alpha-D-manno-oct-2-ulosonate + CTP = CMP-3-deoxy-beta-D-manno-octulosonate + diphosphate. It functions in the pathway nucleotide-sugar biosynthesis; CMP-3-deoxy-D-manno-octulosonate biosynthesis; CMP-3-deoxy-D-manno-octulosonate from 3-deoxy-D-manno-octulosonate and CTP: step 1/1. The protein operates within bacterial outer membrane biogenesis; lipopolysaccharide biosynthesis. Functionally, activates KDO (a required 8-carbon sugar) for incorporation into bacterial lipopolysaccharide in Gram-negative bacteria. This is 3-deoxy-manno-octulosonate cytidylyltransferase from Francisella tularensis subsp. holarctica (strain LVS).